The chain runs to 335 residues: MDFREVIEQRYHQLLSRYIAELTETSLYQAQKFSRKTIEHQIPPEEIISIHRKVLKELYPSLPEDVFHSLDFLIEVMIGYGMAYQEHQTLRGIQQEIKSEIEIAANVQQTLLGTKVPQEEALDIGAISVPAKQMSGDYYHFVKDKESINIAIADVIGKGIPAALCMSMIKYAMDSLPETGIHPSQVLKNLNRVVEQNVDASMFITMFYANYNMDKHQFTYASAGHEPGFYYSQKDNTFYDLEAKGLVLGISQDYDYKQFDQHLEKGDMIVLFSDGVTECRTENGFLERPDLQKLIEEHMCSSAQEMVKNIYDSLLKLQDFQLHDDFTLIVLRRKV.

The PPM-type phosphatase domain maps to 123-333 (DIGAISVPAK…DDFTLIVLRR (211 aa)).

The catalysed reaction is O-phospho-L-serine + H2O = L-serine + phosphate. The enzyme catalyses O-phospho-D-serine + H2O = D-serine + phosphate. With respect to regulation, stimulated by a long-lived interaction with RsbT. Positive regulator of sigma-B activity. Dephosphorylates RsbV in response to environmental stress conveyed from the RsbXST module. This is Phosphoserine phosphatase RsbU (rsbU) from Bacillus subtilis (strain 168).